Consider the following 424-residue polypeptide: UPF0597 protein Shewmr7_2876 (424 aa).

Belongs to the UPF0597 family.

The polypeptide is UPF0597 protein Shewmr7_2876 (Shewanella sp. (strain MR-7)).